The sequence spans 253 residues: 5'/3'-nucleotidase SurE (253 aa).

Residues Asp8, Asp9, Ser39, and Asn92 each coordinate a divalent metal cation.

This sequence belongs to the SurE nucleotidase family. It depends on a divalent metal cation as a cofactor.

Its subcellular location is the cytoplasm. The enzyme catalyses a ribonucleoside 5'-phosphate + H2O = a ribonucleoside + phosphate. It catalyses the reaction a ribonucleoside 3'-phosphate + H2O = a ribonucleoside + phosphate. It carries out the reaction [phosphate](n) + H2O = [phosphate](n-1) + phosphate + H(+). Functionally, nucleotidase with a broad substrate specificity as it can dephosphorylate various ribo- and deoxyribonucleoside 5'-monophosphates and ribonucleoside 3'-monophosphates with highest affinity to 3'-AMP. Also hydrolyzes polyphosphate (exopolyphosphatase activity) with the preference for short-chain-length substrates (P20-25). Might be involved in the regulation of dNTP and NTP pools, and in the turnover of 3'-mononucleotides produced by numerous intracellular RNases (T1, T2, and F) during the degradation of various RNAs. The polypeptide is 5'/3'-nucleotidase SurE (Escherichia fergusonii (strain ATCC 35469 / DSM 13698 / CCUG 18766 / IAM 14443 / JCM 21226 / LMG 7866 / NBRC 102419 / NCTC 12128 / CDC 0568-73)).